The following is a 277-amino-acid chain: Large ribosomal subunit protein uL2 (277 aa).

Disordered regions lie at residues 32–58 (KSLT…RGGG) and 225–277 (VAMN…RRNK). A compositionally biased stretch (basic residues) spans 258 to 277 (YKTRKKKRYSDKFIIKRRNK).

This sequence belongs to the universal ribosomal protein uL2 family. As to quaternary structure, part of the 50S ribosomal subunit. Forms a bridge to the 30S subunit in the 70S ribosome.

One of the primary rRNA binding proteins. Required for association of the 30S and 50S subunits to form the 70S ribosome, for tRNA binding and peptide bond formation. It has been suggested to have peptidyltransferase activity; this is somewhat controversial. Makes several contacts with the 16S rRNA in the 70S ribosome. This Borreliella afzelii (strain PKo) (Borrelia afzelii) protein is Large ribosomal subunit protein uL2.